The chain runs to 479 residues: Ribulose bisphosphate carboxylase large chain (479 aa).

Residues 1 to 2 (MS) constitute a propeptide that is removed on maturation. At Pro3 the chain carries N-acetylproline. Residues Thr65, Asn123, 173 to 177 (TIKPK), and 201 to 204 (KDDE) each bind substrate. Catalysis depends on Lys175, which acts as the Proton acceptor. Mg(2+) is bound by residues Lys201, Asp203, and Glu204. Lys201 is subject to N6-carboxylysine. Residue Ser208 is modified to Phosphoserine. The Proton acceptor role is filled by His294. Residues 294-295 (HR) and His327 each bind substrate. Position 330 is a phosphothreonine (Thr330). Substrate contacts are provided by residues Lys334 and 379–381 (SGG).

It belongs to the RuBisCO large chain family. Type I subfamily. Heterohexadecamer of 8 large chains and 8 small chains; disulfide-linked. The disulfide link is formed within the large subunit homodimers. Interacts with RBCX1 and RBCX1. An intermediate complex made of eight RbcL subunits interacts with the chaperone BSD2. It depends on Mg(2+) as a cofactor. In terms of processing, the disulfide bond which can form in the large chain dimeric partners within the hexadecamer appears to be associated with oxidative stress and protein turnover.

The protein resides in the plastid. The protein localises to the chloroplast. It catalyses the reaction 2 (2R)-3-phosphoglycerate + 2 H(+) = D-ribulose 1,5-bisphosphate + CO2 + H2O. It carries out the reaction D-ribulose 1,5-bisphosphate + O2 = 2-phosphoglycolate + (2R)-3-phosphoglycerate + 2 H(+). In terms of biological role, ruBisCO catalyzes two reactions: the carboxylation of D-ribulose 1,5-bisphosphate, the primary event in carbon dioxide fixation, as well as the oxidative fragmentation of the pentose substrate in the photorespiration process. Both reactions occur simultaneously and in competition at the same active site. Binds to abscisic acid (ABA). This is Ribulose bisphosphate carboxylase large chain from Arabidopsis thaliana (Mouse-ear cress).